We begin with the raw amino-acid sequence, 347 residues long: S-adenosylmethionine:tRNA ribosyltransferase-isomerase (347 aa).

The protein belongs to the QueA family. In terms of assembly, monomer.

Its subcellular location is the cytoplasm. It carries out the reaction 7-aminomethyl-7-carbaguanosine(34) in tRNA + S-adenosyl-L-methionine = epoxyqueuosine(34) in tRNA + adenine + L-methionine + 2 H(+). It participates in tRNA modification; tRNA-queuosine biosynthesis. Its function is as follows. Transfers and isomerizes the ribose moiety from AdoMet to the 7-aminomethyl group of 7-deazaguanine (preQ1-tRNA) to give epoxyqueuosine (oQ-tRNA). This chain is S-adenosylmethionine:tRNA ribosyltransferase-isomerase, found in Gluconobacter oxydans (strain 621H) (Gluconobacter suboxydans).